We begin with the raw amino-acid sequence, 222 residues long: N-(5'-phosphoribosyl)anthranilate isomerase (222 aa).

It belongs to the TrpF family.

The catalysed reaction is N-(5-phospho-beta-D-ribosyl)anthranilate = 1-(2-carboxyphenylamino)-1-deoxy-D-ribulose 5-phosphate. The protein operates within amino-acid biosynthesis; L-tryptophan biosynthesis; L-tryptophan from chorismate: step 3/5. This chain is N-(5'-phosphoribosyl)anthranilate isomerase, found in Beijerinckia indica subsp. indica (strain ATCC 9039 / DSM 1715 / NCIMB 8712).